Reading from the N-terminus, the 542-residue chain is MLO-like protein 7 (542 aa).

The Extracellular portion of the chain corresponds to 1 to 38 (MITRSRCRRSLLWFLVFHGGATATGAPSGGKELSQTPT). A helical transmembrane segment spans residues 39 to 59 (WAVAVVCTFLILISHLLEKGL). Residues 60–82 (QRLANWLWKKHKNSLLEALEKIK) lie on the Cytoplasmic side of the membrane. Residues 83–103 (AELMILGFISLLLTFGEPYIL) form a helical membrane-spanning segment. The Extracellular portion of the chain corresponds to 104-165 (KICVPRKAAL…ITLKGLHQLH (62 aa)). The chain crosses the membrane as a helical span at residues 166–186 (ILLFFLAIFHIVYSLITMMLS). Residues 187-288 (RLKIRGWKKW…IKRSLEDDFK (102 aa)) are Cytoplasmic-facing. A helical transmembrane segment spans residues 289–309 (LVVGISPVLWASFVIFLLFNV). Topologically, residues 310-315 (NGWRTL) are extracellular. A helical transmembrane segment spans residues 316–336 (FWASIPPLLIILAVGTKLQAI). The Cytoplasmic segment spans residues 337 to 374 (MATMALEIVETHAVVQGMPLVQGSDRYFWFDCPQLLLH). Residues 375–395 (LIHFALFQNAFQITHFFWIWY) form a helical membrane-spanning segment. Topologically, residues 396–414 (SFGLKSCFHKDFNLVVSKL) are extracellular. A helical transmembrane segment spans residues 415-435 (FLCLGALILCSYITLPLYALV). Residues 436–542 (TQMGSHMKKA…QQQEMQFHNS (107 aa)) lie on the Cytoplasmic side of the membrane. Residues 449 to 470 (EQMAKALKKWHKDIKLKKGKAR) form a calmodulin-binding region.

It belongs to the MLO family. In terms of tissue distribution, restricted to pollen, synergids, pistils and immature anthers. Also detected in seedlings, leaves, stems and inflorescens.

The protein localises to the cell membrane. It localises to the endomembrane system. In terms of biological role, may be involved in modulation of pathogen defense and leaf cell death. Activity seems to be regulated by Ca(2+)-dependent calmodulin binding and seems not to require heterotrimeric G proteins. Controls pollen tube reception in the female gametophyte synergids. The protein is MLO-like protein 7 (MLO7) of Arabidopsis thaliana (Mouse-ear cress).